A 376-amino-acid polypeptide reads, in one-letter code: Succinyl-diaminopimelate desuccinylase (376 aa).

A Zn(2+)-binding site is contributed by His-64. Residue Asp-66 is part of the active site. Asp-97 provides a ligand contact to Zn(2+). Glu-131 functions as the Proton acceptor in the catalytic mechanism. Glu-132, Glu-160, and His-347 together coordinate Zn(2+).

It belongs to the peptidase M20A family. DapE subfamily. Homodimer. Zn(2+) serves as cofactor. Co(2+) is required as a cofactor.

The enzyme catalyses N-succinyl-(2S,6S)-2,6-diaminopimelate + H2O = (2S,6S)-2,6-diaminopimelate + succinate. The protein operates within amino-acid biosynthesis; L-lysine biosynthesis via DAP pathway; LL-2,6-diaminopimelate from (S)-tetrahydrodipicolinate (succinylase route): step 3/3. Functionally, catalyzes the hydrolysis of N-succinyl-L,L-diaminopimelic acid (SDAP), forming succinate and LL-2,6-diaminopimelate (DAP), an intermediate involved in the bacterial biosynthesis of lysine and meso-diaminopimelic acid, an essential component of bacterial cell walls. This chain is Succinyl-diaminopimelate desuccinylase, found in Wigglesworthia glossinidia brevipalpis.